Reading from the N-terminus, the 121-residue chain is Small ribosomal subunit protein uS13 (121 aa).

The disordered stretch occupies residues 97-121 (VRGQRTRTNARTRRGARKTVAGKKK). The segment covering 100–121 (QRTRTNARTRRGARKTVAGKKK) has biased composition (basic residues).

The protein belongs to the universal ribosomal protein uS13 family. Part of the 30S ribosomal subunit. Forms a loose heterodimer with protein S19. Forms two bridges to the 50S subunit in the 70S ribosome.

Its function is as follows. Located at the top of the head of the 30S subunit, it contacts several helices of the 16S rRNA. In the 70S ribosome it contacts the 23S rRNA (bridge B1a) and protein L5 of the 50S subunit (bridge B1b), connecting the 2 subunits; these bridges are implicated in subunit movement. Contacts the tRNAs in the A and P-sites. In Synechococcus sp. (strain CC9605), this protein is Small ribosomal subunit protein uS13.